Reading from the N-terminus, the 522-residue chain is Cytochrome P450 4e5, mitochondrial (522 aa).

Heme contacts are provided by glutamate 307 and cysteine 443.

It belongs to the cytochrome P450 family. The cofactor is heme.

The protein resides in the mitochondrion. Functionally, probably involved in steroid hormones biosynthesis. The sequence is that of Cytochrome P450 4e5, mitochondrial (Cyp4e5) from Drosophila mettleri (Fruit fly).